A 314-amino-acid polypeptide reads, in one-letter code: Fructose-1,6-bisphosphatase class 1 (314 aa).

The Mg(2+) site is built by glutamate 91, aspartate 112, leucine 114, and aspartate 115. Substrate contacts are provided by residues 115–118, tyrosine 223, and lysine 254; that span reads DGSS. Residue glutamate 260 participates in Mg(2+) binding.

Belongs to the FBPase class 1 family. As to quaternary structure, homotetramer. Mg(2+) serves as cofactor.

The protein resides in the cytoplasm. It catalyses the reaction beta-D-fructose 1,6-bisphosphate + H2O = beta-D-fructose 6-phosphate + phosphate. Its pathway is carbohydrate biosynthesis; gluconeogenesis. This is Fructose-1,6-bisphosphatase class 1 from Geobacter metallireducens (strain ATCC 53774 / DSM 7210 / GS-15).